Here is a 124-residue protein sequence, read N- to C-terminus: Large ribosomal subunit protein uL18 (124 aa).

It belongs to the universal ribosomal protein uL18 family. In terms of assembly, part of the 50S ribosomal subunit; part of the 5S rRNA/L5/L18/L25 subcomplex. Contacts the 5S and 23S rRNAs.

Functionally, this is one of the proteins that bind and probably mediate the attachment of the 5S RNA into the large ribosomal subunit, where it forms part of the central protuberance. The chain is Large ribosomal subunit protein uL18 from Caldicellulosiruptor saccharolyticus (strain ATCC 43494 / DSM 8903 / Tp8T 6331).